A 422-amino-acid chain; its full sequence is Putative acid phosphatase 5 (422 aa).

The signal sequence occupies residues 1-13 (MLLLLVLLIGASG). His-40 serves as the catalytic Nucleophile. Asn-104, Asn-210, and Asn-218 each carry an N-linked (GlcNAc...) asparagine glycan. 3 disulfides stabilise this stretch: Cys-152–Cys-363, Cys-205–Cys-302, and Cys-338–Cys-342. The active-site Proton donor is the Asp-279. Residues Asn-312 and Asn-323 are each glycosylated (N-linked (GlcNAc...) asparagine).

The protein belongs to the histidine acid phosphatase family.

The enzyme catalyses a phosphate monoester + H2O = an alcohol + phosphate. The chain is Putative acid phosphatase 5 (pho-5) from Caenorhabditis elegans.